A 264-amino-acid chain; its full sequence is MTSSIKSDAPQFLLDLDNCSSLPPTPPKTASPGNSKMKGFNISDLCLDLDSSTSSSCSVSPASSFHTRSESVGQQQSGRNSPVSSSTESPTKRPKYSYNALIAMAIQSSPFKSLRVSEIYKYISSNFSYYKNQKPLQWQNSVRHNLSLHKEFRKVRTLDGKGSYWAMTADLGTDVYISNNCGKLRRQKSKVAKFPPMQQHFPIPQLPTQNIHQLCMQNPQILATLLQNMYLQNMQNLQNIPMVPGFPIIPVPINPTSFHFPKSS.

Disordered stretches follow at residues 15–36 (DLDNCSSLPPTPPKTASPGNSK) and 50–93 (DSST…PTKR). Residues 50-64 (DSSTSSSCSVSPASS) are compositionally biased toward low complexity. Residues 70–89 (ESVGQQQSGRNSPVSSSTES) show a composition bias toward polar residues. Positions 93–186 (RPKYSYNALI…ISNNCGKLRR (94 aa)) form a DNA-binding region, fork-head.

It localises to the nucleus. The protein resides in the cytoplasm. Functionally, transcription factor. Plays a role in embryogenesis and later development, perhaps acting redundantly with forkhead protein fkh-2. This chain is Forkhead box protein pes-1, found in Caenorhabditis elegans.